A 77-amino-acid chain; its full sequence is DNA-directed RNA polymerase subunit epsilon (77 aa).

It belongs to the RNA polymerase subunit epsilon family. RNAP is composed of a core of 2 alpha, a beta and a beta' subunit. The core is associated with a delta subunit, and at least one of epsilon or omega. When a sigma factor is associated with the core the holoenzyme is formed, which can initiate transcription.

It catalyses the reaction RNA(n) + a ribonucleoside 5'-triphosphate = RNA(n+1) + diphosphate. In terms of biological role, a non-essential component of RNA polymerase (RNAP). The protein is DNA-directed RNA polymerase subunit epsilon of Streptococcus pneumoniae (strain P1031).